Consider the following 249-residue polypeptide: MIT domain-containing protein 1 (249 aa).

Residues 8–86 (QDPQSTAAAT…KYLDQEKEDG (79 aa)) form the MIT domain. The tract at residues 168 to 231 (RGLQEIEESL…SLGYCDFDLR (64 aa)) is important for association with membranes.

Homodimer. Interacts (via MIT domain) with CHMP1A, CHMP1B, CHMP2A and IST1.

Its subcellular location is the late endosome membrane. The protein localises to the midbody. It is found in the membrane. In terms of biological role, required for efficient abscission at the end of cytokinesis, together with components of the ESCRT-III complex. The protein is MIT domain-containing protein 1 (MITD1) of Homo sapiens (Human).